Consider the following 185-residue polypeptide: Ribosome-recycling factor (185 aa).

This sequence belongs to the RRF family.

The protein resides in the cytoplasm. Functionally, responsible for the release of ribosomes from messenger RNA at the termination of protein biosynthesis. May increase the efficiency of translation by recycling ribosomes from one round of translation to another. The sequence is that of Ribosome-recycling factor from Xanthomonas euvesicatoria pv. vesicatoria (strain 85-10) (Xanthomonas campestris pv. vesicatoria).